A 450-amino-acid polypeptide reads, in one-letter code: Sulfite exporter TauE/SafE family protein 1 (450 aa).

Transmembrane regions (helical) follow at residues 5–25 (LVPL…SALA), 48–68 (TIEV…AASI), 70–90 (SAGG…IAGL), 97–117 (SFSA…NLFL), 130–150 (FDLA…GVIC), 153–173 (MFPN…STMK), 223–243 (FPWM…SINL), 261–281 (ALYW…TLCI), 316–336 (VMAL…GMLI), 340–360 (LLQI…MVLF), 378–398 (GTAA…LMVV), and 408–428 (ASII…LMTT).

This sequence belongs to the 4-toluene sulfonate uptake permease (TSUP) (TC 2.A.102) family.

It is found in the membrane. This chain is Sulfite exporter TauE/SafE family protein 1, found in Arabidopsis thaliana (Mouse-ear cress).